We begin with the raw amino-acid sequence, 296 residues long: MDMEKARLRSHMLIESLPYLQKFQGKVIVIKYGGHAMKDTLLKQSFAQSIALLNLVGIHPIVVHGGGPQIGNMLSRLNIQSEFREGLRVTDKATMDVVEMVLAGSVNKEIVNQVNQAGAKAVGLSGKDGAFILAEKNDLILTKENQPPEIINLGNVGRVVHIETSLLYTLIEKGFIPIIAPVGTDNKQTYNINADEVAGAIAGALKATRLLLLTDVEGILDLNKKLIQSIYLEDTPKLFSDGIVFGGMIPKLQCCIEAIEQGVEKVVILDGRLEHSILLELFTDQGVGTEIVKKPV.

Residues 66 to 67 (GG), R88, and N191 each bind substrate.

This sequence belongs to the acetylglutamate kinase family. ArgB subfamily.

Its subcellular location is the cytoplasm. The enzyme catalyses N-acetyl-L-glutamate + ATP = N-acetyl-L-glutamyl 5-phosphate + ADP. It functions in the pathway amino-acid biosynthesis; L-arginine biosynthesis; N(2)-acetyl-L-ornithine from L-glutamate: step 2/4. Catalyzes the ATP-dependent phosphorylation of N-acetyl-L-glutamate. This Lawsonia intracellularis (strain PHE/MN1-00) protein is Acetylglutamate kinase.